Reading from the N-terminus, the 361-residue chain is Protein RecA (361 aa).

77–84 (GPESSGKT) serves as a coordination point for ATP.

It belongs to the RecA family.

It is found in the cytoplasm. In terms of biological role, can catalyze the hydrolysis of ATP in the presence of single-stranded DNA, the ATP-dependent uptake of single-stranded DNA by duplex DNA, and the ATP-dependent hybridization of homologous single-stranded DNAs. It interacts with LexA causing its activation and leading to its autocatalytic cleavage. This Rhizobium etli protein is Protein RecA.